We begin with the raw amino-acid sequence, 349 residues long: tRNA N6-adenosine threonylcarbamoyltransferase (349 aa).

Fe cation is bound by residues His-114 and His-118. Substrate-binding positions include 136–140 (IMSGG), Asp-169, Gly-182, and Asn-280. Asp-308 is a binding site for Fe cation.

It belongs to the KAE1 / TsaD family. It depends on Fe(2+) as a cofactor.

Its subcellular location is the cytoplasm. It carries out the reaction L-threonylcarbamoyladenylate + adenosine(37) in tRNA = N(6)-L-threonylcarbamoyladenosine(37) in tRNA + AMP + H(+). Required for the formation of a threonylcarbamoyl group on adenosine at position 37 (t(6)A37) in tRNAs that read codons beginning with adenine. Is involved in the transfer of the threonylcarbamoyl moiety of threonylcarbamoyl-AMP (TC-AMP) to the N6 group of A37, together with TsaE and TsaB. TsaD likely plays a direct catalytic role in this reaction. The sequence is that of tRNA N6-adenosine threonylcarbamoyltransferase from Ehrlichia chaffeensis (strain ATCC CRL-10679 / Arkansas).